The primary structure comprises 416 residues: UDP-N-acetylglucosamine 1-carboxyvinyltransferase (416 aa).

Residue 22–23 coordinates phosphoenolpyruvate; the sequence is KN. Arg92 provides a ligand contact to UDP-N-acetyl-alpha-D-glucosamine. Cys116 serves as the catalytic Proton donor. Cys116 bears the 2-(S-cysteinyl)pyruvic acid O-phosphothioketal mark. Residues 121-125, Asp304, and Ile326 contribute to the UDP-N-acetyl-alpha-D-glucosamine site; that span reads RPIDQ.

The protein belongs to the EPSP synthase family. MurA subfamily.

It is found in the cytoplasm. The catalysed reaction is phosphoenolpyruvate + UDP-N-acetyl-alpha-D-glucosamine = UDP-N-acetyl-3-O-(1-carboxyvinyl)-alpha-D-glucosamine + phosphate. The protein operates within cell wall biogenesis; peptidoglycan biosynthesis. Cell wall formation. Adds enolpyruvyl to UDP-N-acetylglucosamine. This Desulfatibacillum aliphaticivorans protein is UDP-N-acetylglucosamine 1-carboxyvinyltransferase.